Consider the following 108-residue polypeptide: UPF0060 membrane protein YnfA (108 aa).

At 1–5 (MLKTT) the chain is on the periplasmic side. A helical transmembrane segment spans residues 6 to 26 (LLFFVTALCEIIGCFLPWLWI). The Cytoplasmic segment spans residues 27 to 30 (KRGA). A helical membrane pass occupies residues 31–51 (SVWWLLPAAASLALFVWLLTL). Topologically, residues 52-60 (HPAASGRVY) are periplasmic. The chain crosses the membrane as a helical span at residues 61 to 81 (AAYGGVYVCTALLWLRVVDGV). At 82–84 (RLT) the chain is on the cytoplasmic side. A helical membrane pass occupies residues 85-105 (VYDWCGALIALCGMLIIVVGW). At 106-108 (GRT) the chain is on the periplasmic side.

This sequence belongs to the UPF0060 family.

It localises to the cell inner membrane. The chain is UPF0060 membrane protein YnfA from Salmonella paratyphi A (strain ATCC 9150 / SARB42).